We begin with the raw amino-acid sequence, 465 residues long: Anthocyanidin 3-O-glucosyltransferase 2 (465 aa).

Histidine 22 (proton acceptor) is an active-site residue. Histidine 22 and glutamine 87 together coordinate an anthocyanidin. Aspartate 122 acts as the Charge relay in catalysis. Residue threonine 145 participates in UDP-alpha-D-glucose binding. Histidine 154 provides a ligand contact to an anthocyanidin. 7 residues coordinate UDP-alpha-D-glucose: alanine 345, glutamine 347, histidine 362, tryptophan 365, asparagine 366, serine 367, and glutamate 370. Glycine 385 contacts an anthocyanidin. Residues aspartate 386 and glutamine 387 each coordinate UDP-alpha-D-glucose.

This sequence belongs to the UDP-glycosyltransferase family. As to expression, highest expression detected in fruit, with very low levels detected in petal and leaf.

The catalysed reaction is an anthocyanidin + UDP-alpha-D-glucose + H(+) = an anthocyanidin 3-O-beta-D-glucoside + UDP. It catalyses the reaction pelargonidin + UDP-alpha-D-glucose = pelargonidin 3-O-beta-D-glucoside + UDP. It carries out the reaction cyanidin + UDP-alpha-D-glucose = cyanidin 3-O-beta-D-glucoside + UDP + H(+). Its pathway is pigment biosynthesis; anthocyanin biosynthesis. Its function is as follows. In the presence of other necessary color factors, this glycosylation reaction allows the accumulation of anthocyanin pigments. Anthocyanidins are the preferred substrates, while flavonols are only a minor substrate in vitro. In Fragaria ananassa (Strawberry), this protein is Anthocyanidin 3-O-glucosyltransferase 2.